A 179-amino-acid polypeptide reads, in one-letter code: Large ribosomal subunit protein uL6 (179 aa).

This sequence belongs to the universal ribosomal protein uL6 family. As to quaternary structure, part of the 50S ribosomal subunit.

In terms of biological role, this protein binds to the 23S rRNA, and is important in its secondary structure. It is located near the subunit interface in the base of the L7/L12 stalk, and near the tRNA binding site of the peptidyltransferase center. The chain is Large ribosomal subunit protein uL6 from Prochlorococcus marinus (strain MIT 9312).